We begin with the raw amino-acid sequence, 180 residues long: ATP synthase subunit delta (180 aa).

This sequence belongs to the ATPase delta chain family. F-type ATPases have 2 components, F(1) - the catalytic core - and F(0) - the membrane proton channel. F(1) has five subunits: alpha(3), beta(3), gamma(1), delta(1), epsilon(1). F(0) has three main subunits: a(1), b(2) and c(10-14). The alpha and beta chains form an alternating ring which encloses part of the gamma chain. F(1) is attached to F(0) by a central stalk formed by the gamma and epsilon chains, while a peripheral stalk is formed by the delta and b chains.

The protein resides in the cell membrane. F(1)F(0) ATP synthase produces ATP from ADP in the presence of a proton or sodium gradient. F-type ATPases consist of two structural domains, F(1) containing the extramembraneous catalytic core and F(0) containing the membrane proton channel, linked together by a central stalk and a peripheral stalk. During catalysis, ATP synthesis in the catalytic domain of F(1) is coupled via a rotary mechanism of the central stalk subunits to proton translocation. Its function is as follows. This protein is part of the stalk that links CF(0) to CF(1). It either transmits conformational changes from CF(0) to CF(1) or is implicated in proton conduction. This is ATP synthase subunit delta from Enterococcus faecalis (strain ATCC 700802 / V583).